The sequence spans 426 residues: Adenylosuccinate synthetase (426 aa).

GTP-binding positions include 11 to 17 and 39 to 41; these read GDEGKGK and GHT. D12 serves as the catalytic Proton acceptor. Mg(2+)-binding residues include D12 and G39. IMP contacts are provided by residues 12–15, 37–40, T130, R144, N226, T241, and R305; these read DEGK and NAGH. The active-site Proton donor is H40. A substrate-binding site is contributed by 301-307; the sequence is VTTGRKR. GTP-binding positions include R307, 333–335, and 415–417; these read KLD and GTG.

Belongs to the adenylosuccinate synthetase family. Homodimer. The cofactor is Mg(2+).

The protein localises to the cytoplasm. The catalysed reaction is IMP + L-aspartate + GTP = N(6)-(1,2-dicarboxyethyl)-AMP + GDP + phosphate + 2 H(+). It participates in purine metabolism; AMP biosynthesis via de novo pathway; AMP from IMP: step 1/2. In terms of biological role, plays an important role in the de novo pathway and in the salvage pathway of purine nucleotide biosynthesis. Catalyzes the first committed step in the biosynthesis of AMP from IMP. In Meyerozyma guilliermondii (strain ATCC 6260 / CBS 566 / DSM 6381 / JCM 1539 / NBRC 10279 / NRRL Y-324) (Yeast), this protein is Adenylosuccinate synthetase.